A 55-amino-acid chain; its full sequence is uncharacterized protein (55 aa).

A helical membrane pass occupies residues 27–44; the sequence is SFWFILISASSFLIYSLF.

The protein localises to the membrane. This is an uncharacterized protein from Dictyostelium discoideum (Social amoeba).